Consider the following 586-residue polypeptide: NudC domain-containing protein 1 (586 aa).

The region spanning 275 to 364 (KREPLYNWQQ…EPGCTWAELV (90 aa)) is the CS domain.

Its subcellular location is the cytoplasm. The protein localises to the nucleus. The chain is NudC domain-containing protein 1 from Xenopus laevis (African clawed frog).